A 330-amino-acid polypeptide reads, in one-letter code: Dof zinc finger protein DOF2.4 (330 aa).

Over residues 14-25 (NWQQAPPSNYNH) the composition is skewed to polar residues. Positions 14-70 (NWQQAPPSNYNHDGTGASANGGHVLRPQLQPQQQPQQQPHPNGSGGGGGGGGGSIRA) are disordered. Low complexity predominate over residues 40-55 (PQLQPQQQPQQQPHPN). Gly residues predominate over residues 56 to 68 (GSGGGGGGGGGSI). The segment at 89-143 (LKCPRCESTNTKFCYFNNYSLTQPRHFCKTCRRYWTRGGALRNVPVGGGCRRNRR) adopts a Dof-type zinc-finger fold. Zn(2+) contacts are provided by cysteine 91, cysteine 94, cysteine 116, and cysteine 119. Disordered regions lie at residues 133–165 (PVGG…SFSS) and 255–276 (QQSS…SANG). Residues 146–165 (SNSNNNNNSTATSNNTSFSS) show a composition bias toward low complexity. The segment covering 265–276 (EDSSNPNPSANG) has biased composition (polar residues).

As to expression, specific to the vascular tissues. The PEAR proteins (e.g. DOF2.4, DOF5.1, DOF3.2, DOF1.1, DOF5.6 and DOF5.3) form a short-range concentration gradient that peaks at protophloem sieve elements (PSE).

Its subcellular location is the nucleus. The protein localises to the symplast. Functionally, transcription factor that binds specifically to a 5'-AA[AG]G-3' consensus core sequence. Probably involved in early processes for vascular development. The PEAR proteins (e.g. DOF2.4, DOF5.1, DOF3.2, DOF1.1, DOF5.6 and DOF5.3) activate gene expression that promotes radial growth of protophloem sieve elements. Triggers the transcription of HD-ZIP III genes, especially in the central domain of vascular tissue. The sequence is that of Dof zinc finger protein DOF2.4 from Arabidopsis thaliana (Mouse-ear cress).